The chain runs to 229 residues: Acidic leucine-rich nuclear phosphoprotein 32-related protein 1 (229 aa).

4 LRR repeats span residues 19–40 (TVDTLFLDNAEDGQIGGLTDQL), 42–63 (NLEMLSMVKCGLTTLAGFPTLP), 64–85 (ALTYLDISDNQLGDNASFDVLV), and 90–110 (DLKKITLASNKLSLDNLRCLK). The LRRCT domain maps to 124-164 (PSLGLLEDYREKMFEMIPSLKILDGCDVDGEEVEEEFAGEG). A compositionally biased stretch (acidic residues) spans 155–177 (EVEEEFAGEGGEDSEEGSGDEDG). Positions 155–229 (EVEEEFAGEG…DNKKAAGDDE (75 aa)) are disordered. Over residues 219–229 (PDNKKAAGDDE) the composition is skewed to basic and acidic residues.

It belongs to the ANP32 family.

In Caenorhabditis elegans, this protein is Acidic leucine-rich nuclear phosphoprotein 32-related protein 1.